The chain runs to 196 residues: Probable malonic semialdehyde reductase RutE (196 aa).

Belongs to the nitroreductase family. HadB/RutE subfamily. It depends on FMN as a cofactor.

The catalysed reaction is 3-hydroxypropanoate + NADP(+) = 3-oxopropanoate + NADPH + H(+). In terms of biological role, may reduce toxic product malonic semialdehyde to 3-hydroxypropionic acid, which is excreted. In Escherichia coli O139:H28 (strain E24377A / ETEC), this protein is Probable malonic semialdehyde reductase RutE.